Consider the following 270-residue polypeptide: Transcriptional regulator BrlR (270 aa).

Met-1 contacts 3',3'-c-di-GMP. Positions 1–71 (MLTIGQLARI…LEAIDRLKRD (71 aa)) constitute an HTH merR-type domain. A DNA-binding region (H-T-H motif) is located at residues 4 to 23 (IGQLARIFEISTKTLRHYDA). Positions 31, 34, 35, 40, 67, 70, 86, and 270 each coordinate 3',3'-c-di-GMP. The interval 120-270 (MHARIVERPA…SQVDLYIPIY (151 aa)) is involved in effector-binding, probably including pyocyanine-binding.

In terms of assembly, monomer. Homodimer; dimer formation enhanced in the presence of the second messenger, cyclic di-GMP (c-di-GMP). Homotetramer; dimer of dimers, arranged in a head-to-tail fashion, which may reduce DNA-binding ability. Conformational changes upon binding c-di-GMP or pyocyanine may facilitate DNA binding.

In terms of biological role, transcriptional regulator. Responsive to the second messenger cyclic di-GMP (c-di-GMP) and to the virulence factor pyocyanine, which both enhance gene expression and promoter DNA binding of BrlR. Activates expression of operons encoding the multidrug efflux pumps MexAB-OprM and MexEF-OprN and several ABC transport systems, acting by direct binding to their respective promoters. Also acts as a repressor of the two component regulatory system, PhoPQ. Binds to promoter of its own gene. Contributes to the antimicrobial tolerance exhibited by biofilms, acting, at least in part, by activating expression of multidrug efflux pumps and ABC transporters. The chain is Transcriptional regulator BrlR from Pseudomonas aeruginosa (strain ATCC 15692 / DSM 22644 / CIP 104116 / JCM 14847 / LMG 12228 / 1C / PRS 101 / PAO1).